Here is a 60-residue protein sequence, read N- to C-terminus: Ixodegrin-like peptide (60 aa).

An N-terminal signal peptide occupies residues 1 to 19 (MNAVFIAALLILGTSTFDA). The Cell attachment site signature appears at 49 to 51 (RGD).

The protein belongs to the ixodegrin family. Post-translationally, contains 3 disulfide bonds. Expressed in salivary glands.

The protein localises to the secreted. Its function is as follows. Tick salivary platelet aggregation inhibitor that plays an important part in the anti-hemostatic strategy of ticks. Inhibits platelet aggregation induced by ADP, thrombin and thromboxane A2 (TXA2). Blocks platelet adhesion to soluble collagen (most probably through the binding to alpha-2/beta-1 integrin (ITGA2/ITGB1)) and binds to purified glycoprotein IIb/IIIa (ITGA2B/ITGB3) in a dose-dependent manner. In vivo, reduces thrombus weight effectively in a rat arteriovenous shunt model and inhibits thrombosis in a carrageenan-induced mouse tail thrombosis model. The polypeptide is Ixodegrin-like peptide (Ixodes scapularis (Black-legged tick)).